We begin with the raw amino-acid sequence, 196 residues long: Glycerol-3-phosphate acyltransferase (196 aa).

5 helical membrane passes run 1–21 (MIIL…GYLT), 53–73 (AITA…GSLL), 78–98 (GALV…FLKF), 112–132 (IMTS…VMLI), and 152–172 (LLFG…VMIF).

It belongs to the PlsY family. Probably interacts with PlsX.

The protein resides in the cell membrane. It carries out the reaction an acyl phosphate + sn-glycerol 3-phosphate = a 1-acyl-sn-glycero-3-phosphate + phosphate. The protein operates within lipid metabolism; phospholipid metabolism. Functionally, catalyzes the transfer of an acyl group from acyl-phosphate (acyl-PO(4)) to glycerol-3-phosphate (G3P) to form lysophosphatidic acid (LPA). This enzyme utilizes acyl-phosphate as fatty acyl donor, but not acyl-CoA or acyl-ACP. The chain is Glycerol-3-phosphate acyltransferase from Carboxydothermus hydrogenoformans (strain ATCC BAA-161 / DSM 6008 / Z-2901).